The following is a 247-amino-acid chain: MGRGRVELKRVENKINRQVTFAKRRNGLLKKAYELSVLCDAEVALIVFSNRGKLYEFCSTSSMLKTLERYQKCNYGAPEGNVTSKEALVLELSSQQEYLKLKARYESLQRSQRNLMGEDLGPLSSKDLETLERQLDSSLKQIRSTRTQFMLDQLGDLQRKEHLLCEANRALRQRMEGYQINSLQLNLSAEDMGYGRHHQGHTHGDELFQVQPIECEPTLQIGYHQGDPGSVVTAGPSMNNYMGGWLP.

Positions 1 to 61 (MGRGRVELKR…GKLYEFCSTS (61 aa)) constitute an MADS-box domain. Residues 91–181 (ELSSQQEYLK…RQRMEGYQIN (91 aa)) enclose the K-box domain.

Expressed abundantly in the seed coat and to lesser extent in young buds, carpels, petals, and stamen.

Its subcellular location is the nucleus. Its function is as follows. Probable transcription factor. In Pisum sativum (Garden pea), this protein is MADS-box transcription factor 1.